Reading from the N-terminus, the 114-residue chain is Small ribosomal subunit protein uS17 (114 aa).

The protein belongs to the universal ribosomal protein uS17 family. In terms of assembly, part of the 30S ribosomal subunit.

In terms of biological role, one of the primary rRNA binding proteins, it binds specifically to the 5'-end of 16S ribosomal RNA. The polypeptide is Small ribosomal subunit protein uS17 (Saccharolobus solfataricus (strain ATCC 35092 / DSM 1617 / JCM 11322 / P2) (Sulfolobus solfataricus)).